A 255-amino-acid chain; its full sequence is Phycoerythrobilin:ferredoxin oxidoreductase (255 aa).

This sequence belongs to the HY2 family.

It carries out the reaction (3Z)-phycoerythrobilin + oxidized 2[4Fe-4S]-[ferredoxin] = 15,16-dihydrobiliverdin + reduced 2[4Fe-4S]-[ferredoxin] + 2 H(+). Catalyzes the two-electron reduction of the C2 and C3(1) diene system of 15,16-dihydrobiliverdin. In Nostoc punctiforme (strain ATCC 29133 / PCC 73102), this protein is Phycoerythrobilin:ferredoxin oxidoreductase (pebB).